Consider the following 573-residue polypeptide: MANSPHGGVLKDLLARDAPRHDQLAAEAESLPAIVLSERQLCDLELIMNGGFSPLEGFMNQKDFDGVCENCRLADGNLFSMPITLDASQQVINELKLQAGSRVTLRDFRDDRNLAILTIDDIYRADKEKEAKLVFGGDPEHPAIKYLNTKVEEFYIGGKIEAVNKLNHYDYVALRYTPAELRIHFDKLGWSRVVAFQTRNPMHRAHRELTVRAARARAANVLIHPVVGLTKPGDIDHFTRVRAYQALLPRYPNGMAVLGLLGLAMRMGGPREAIWHAIIRKNHGATHFIVGRDHAGPGKNSKGEEFYGPYDAQHAVEKYKDELGIEVVEFQQVTYLPDTDEYKPKDEVPAGVKTLDISGTELRNRLRTGAHIPEWFSYPEVVKILRESSPPRHTQGFTVFLTGYQNSGKDAIARALQVTLNQQGGRAVSLLLGDTVRHELSSELGFSREDRHTNIQRIAFVASELTKAGAAVIAAPIAPYEHSRKAAREAVSQHGSFFLVHVNTPLEYCEKTDKRGIYAKARAGEIKGFTGVDDPYEAPENAHLTVDVSKQSVRSIVHEIILLLETEGFFDRA.

Positions 1 to 169 (MANSPHGGVL…IEAVNKLNHY (169 aa)) are N-terminal. The interval 170 to 394 (DYVALRYTPA…LRESSPPRHT (225 aa)) is catalytic. Residue glutamine 197 coordinates sulfate. ATP is bound by residues 197 to 200 (QTRN) and 291 to 294 (GRDH). Catalysis depends on residues threonine 198, arginine 199, and asparagine 200. Arginine 199 provides a ligand contact to sulfate. Alanine 295 is a sulfate binding site. Valine 333 provides a ligand contact to ATP. Positions 395 to 573 (QGFTVFLTGY…LETEGFFDRA (179 aa)) are allosteric regulation domain; adenylyl-sulfate kinase-like. 3'-phosphoadenylyl sulfate-binding positions include 434 to 437 (DTVR), arginine 451, 477 to 478 (IA), and arginine 515.

It in the N-terminal section; belongs to the sulfate adenylyltransferase family. In the C-terminal section; belongs to the APS kinase family. As to quaternary structure, homohexamer. Dimer of trimers.

Its subcellular location is the cytoplasm. The catalysed reaction is sulfate + ATP + H(+) = adenosine 5'-phosphosulfate + diphosphate. The protein operates within sulfur metabolism; hydrogen sulfide biosynthesis; sulfite from sulfate: step 1/3. Its activity is regulated as follows. Allosterically inhibited by 3'-phosphoadenosine 5'-phosphosulfate (PAPS). Functionally, catalyzes the first intracellular reaction of sulfate assimilation, forming adenosine-5'-phosphosulfate (APS) from inorganic sulfate and ATP. Plays an important role in sulfate activation as a component of the biosynthesis pathway of sulfur-containing amino acids. The chain is Sulfate adenylyltransferase from Aspergillus oryzae (strain ATCC 42149 / RIB 40) (Yellow koji mold).